The primary structure comprises 202 residues: Small ribosomal subunit protein uS4c (202 aa).

The region spanning 90 to 153 is the S4 RNA-binding domain; it reads MRLDNIIFRL…KSQAIISKNI (64 aa).

It belongs to the universal ribosomal protein uS4 family. Part of the 30S ribosomal subunit. Contacts protein S5. The interaction surface between S4 and S5 is involved in control of translational fidelity.

The protein localises to the plastid. It localises to the chloroplast. In terms of biological role, one of the primary rRNA binding proteins, it binds directly to 16S rRNA where it nucleates assembly of the body of the 30S subunit. With S5 and S12 plays an important role in translational accuracy. In Splachnum sphaericum (Pinkstink dung moss), this protein is Small ribosomal subunit protein uS4c (rps4).